The primary structure comprises 352 residues: Chorismate synthase (352 aa).

Arg48 contributes to the NADP(+) binding site. FMN-binding positions include 125 to 127, 237 to 238, Gly278, 293 to 297, and Arg319; these read RSS, NA, and KPTSS.

This sequence belongs to the chorismate synthase family. In terms of assembly, homotetramer. It depends on FMNH2 as a cofactor.

It carries out the reaction 5-O-(1-carboxyvinyl)-3-phosphoshikimate = chorismate + phosphate. It participates in metabolic intermediate biosynthesis; chorismate biosynthesis; chorismate from D-erythrose 4-phosphate and phosphoenolpyruvate: step 7/7. Its function is as follows. Catalyzes the anti-1,4-elimination of the C-3 phosphate and the C-6 proR hydrogen from 5-enolpyruvylshikimate-3-phosphate (EPSP) to yield chorismate, which is the branch point compound that serves as the starting substrate for the three terminal pathways of aromatic amino acid biosynthesis. This reaction introduces a second double bond into the aromatic ring system. The sequence is that of Chorismate synthase from Francisella tularensis subsp. tularensis (strain FSC 198).